Here is a 299-residue protein sequence, read N- to C-terminus: Porphobilinogen deaminase (299 aa).

The residue at position 242 (cysteine 242) is an S-(dipyrrolylmethanemethyl)cysteine.

It belongs to the HMBS family. Monomer. Dipyrromethane serves as cofactor.

It catalyses the reaction 4 porphobilinogen + H2O = hydroxymethylbilane + 4 NH4(+). The protein operates within porphyrin-containing compound metabolism; protoporphyrin-IX biosynthesis; coproporphyrinogen-III from 5-aminolevulinate: step 2/4. Tetrapolymerization of the monopyrrole PBG into the hydroxymethylbilane pre-uroporphyrinogen in several discrete steps. This Rickettsia typhi (strain ATCC VR-144 / Wilmington) protein is Porphobilinogen deaminase.